Reading from the N-terminus, the 681-residue chain is Transcriptional regulator prz1 (681 aa).

A compositionally biased stretch (basic and acidic residues) spans M1–D15. Disordered stretches follow at residues M1–D29, N66–P96, S340–F372, P410–L433, and K520–E563. Polar residues-rich tracts occupy residues N66–S86 and S340–E358. Over residues P416–L428 the composition is skewed to low complexity. The span at S528–G549 shows a compositional bias: polar residues. S543 and S546 each carry phosphoserine. The segment covering N550–K559 has biased composition (low complexity). C2H2-type zinc fingers lie at residues Y570–H594 and F600–H622. The C2H2-type 3; degenerate zinc-finger motif lies at F628 to E650. Residues R662–K681 are disordered.

The protein belongs to the EGR C2H2-type zinc-finger protein family. Phosphorylated. Dephosphorylated by calcineurin which leads to rapid translocation from the cytoplasm to the nucleus.

It localises to the nucleus. It is found in the cytoplasm. Functionally, involved in the regulation of calcium ion homeostasis. Binds to the calcineurin-dependent response element. Transcriptionally regulates pmc1. The polypeptide is Transcriptional regulator prz1 (prz1) (Schizosaccharomyces pombe (strain 972 / ATCC 24843) (Fission yeast)).